The following is a 364-amino-acid chain: F-box/kelch-repeat protein At3g23880 (364 aa).

The F-box domain occupies M8–H54. 2 Kelch repeats span residues D169–G215 and I216–D265.

In Arabidopsis thaliana (Mouse-ear cress), this protein is F-box/kelch-repeat protein At3g23880.